We begin with the raw amino-acid sequence, 411 residues long: LL-diaminopimelate aminotransferase (411 aa).

The substrate site is built by Tyr-15 and Gly-42. Pyridoxal 5'-phosphate contacts are provided by residues Tyr-72, 108–109 (SK), Tyr-132, Asn-187, Tyr-218, and 246–248 (SFS). Positions 109, 132, and 187 each coordinate substrate. At Lys-249 the chain carries N6-(pyridoxal phosphate)lysine. Residues Arg-257 and Asn-292 each contribute to the pyridoxal 5'-phosphate site. Positions 292 and 388 each coordinate substrate.

The protein belongs to the class-I pyridoxal-phosphate-dependent aminotransferase family. LL-diaminopimelate aminotransferase subfamily. Homodimer. Requires pyridoxal 5'-phosphate as cofactor.

The catalysed reaction is (2S,6S)-2,6-diaminopimelate + 2-oxoglutarate = (S)-2,3,4,5-tetrahydrodipicolinate + L-glutamate + H2O + H(+). It participates in amino-acid biosynthesis; L-lysine biosynthesis via DAP pathway; LL-2,6-diaminopimelate from (S)-tetrahydrodipicolinate (aminotransferase route): step 1/1. In terms of biological role, involved in the synthesis of meso-diaminopimelate (m-DAP or DL-DAP), required for both lysine and peptidoglycan biosynthesis. Catalyzes the direct conversion of tetrahydrodipicolinate to LL-diaminopimelate. This is LL-diaminopimelate aminotransferase from Trichodesmium erythraeum (strain IMS101).